A 199-amino-acid chain; its full sequence is Small ribosomal subunit protein uS4 (199 aa).

In terms of domain architecture, S4 RNA-binding spans 94–157 (SRLDNIVYRM…QNVPTILASI (64 aa)).

It belongs to the universal ribosomal protein uS4 family. Part of the 30S ribosomal subunit. Contacts protein S5. The interaction surface between S4 and S5 is involved in control of translational fidelity.

Its function is as follows. One of the primary rRNA binding proteins, it binds directly to 16S rRNA where it nucleates assembly of the body of the 30S subunit. Functionally, with S5 and S12 plays an important role in translational accuracy. The sequence is that of Small ribosomal subunit protein uS4 from Mycoplasma mobile (strain ATCC 43663 / 163K / NCTC 11711) (Mesomycoplasma mobile).